The chain runs to 117 residues: Peptidyl-tRNA hydrolase (117 aa).

The protein belongs to the PTH2 family.

The protein localises to the cytoplasm. The catalysed reaction is an N-acyl-L-alpha-aminoacyl-tRNA + H2O = an N-acyl-L-amino acid + a tRNA + H(+). Functionally, the natural substrate for this enzyme may be peptidyl-tRNAs which drop off the ribosome during protein synthesis. The sequence is that of Peptidyl-tRNA hydrolase from Thermoplasma volcanium (strain ATCC 51530 / DSM 4299 / JCM 9571 / NBRC 15438 / GSS1).